The following is a 798-amino-acid chain: Heterogeneous nuclear ribonucleoprotein U (798 aa).

The residue at position 2 (serine 2) is an N-acetylserine. Serine 4 carries the post-translational modification Phosphoserine. Positions 8–42 (VKKLKVSELKEELKKRRLSDKGLKADLMDRLQAAL) constitute an SAP domain. N6-acetyllysine occurs at positions 17 and 21. The tract at residues 41–229 (ALDNEAGGRP…VKRPREDHGR (189 aa)) is disordered. Serine 58 carries the post-translational modification Phosphoserine. 2 stretches are compositionally biased toward low complexity: residues 71–80 (AGLEQEAAAG) and 103–113 (ENGAAGAADAG). Composition is skewed to acidic residues over residues 114-128 (AMEE…ENGD) and 134-147 (EGED…EGAG). Positions 153–169 (GEQQSQPPAAAQQASQQ) are enriched in low complexity. At lysine 179 the chain carries N6-acetyllysine. Serine 180 is modified (ADP-ribosylserine). A compositionally biased stretch (low complexity) spans 192-203 (APPGARQGQQQA). Residues 207 to 229 (GKTEQKAGDKKRGVKRPREDHGR) are compositionally biased toward basic and acidic residues. Citrulline is present on arginine 229. Lysine 239 carries the N6-acetyllysine; alternate modification. Residue lysine 239 forms a Glycyl lysine isopeptide (Lys-Gly) (interchain with G-Cter in SUMO1); alternate linkage. Lysine 239 is covalently cross-linked (Glycyl lysine isopeptide (Lys-Gly) (interchain with G-Cter in SUMO2); alternate). Tyrosine 240 bears the Phosphotyrosine mark. Phosphoserine occurs at positions 241 and 245. The region spanning 242 to 438 (RAKSPQPPVE…VEFNFGQKEK (197 aa)) is the B30.2/SPRY domain. Phosphothreonine is present on threonine 260. Position 326 is an N6-acetyllysine (lysine 326). Residues 462-646 (PKGPEEKKDC…QKLLEQYKEE (185 aa)) are ATPase domain. Lysine 469 participates in a covalent cross-link: Glycyl lysine isopeptide (Lys-Gly) (interchain with G-Cter in SUMO2). ATP is bound at residue 478–485 (GLPGAGKT). An N6-acetyllysine; alternate mark is found at lysine 490 and lysine 498. Residues lysine 490 and lysine 498 each participate in a glycyl lysine isopeptide (Lys-Gly) (interchain with G-Cter in SUMO2); alternate cross-link. A Phosphothreonine modification is found at threonine 506. A Glycyl lysine isopeptide (Lys-Gly) (interchain with G-Cter in SUMO2) cross-link involves residue lysine 510. N6-acetyllysine is present on lysine 525. Lysine 539 bears the N6-acetyllysine; alternate mark. Lysine 539 participates in a covalent cross-link: Glycyl lysine isopeptide (Lys-Gly) (interchain with G-Cter in SUMO2); alternate. Residue lysine 548 forms a Glycyl lysine isopeptide (Lys-Gly) (interchain with G-Cter in SUMO2) linkage. A Phosphothreonine modification is found at threonine 556. Glycyl lysine isopeptide (Lys-Gly) (interchain with G-Cter in SUMO2) cross-links involve residues lysine 583 and lysine 600. Residues 585 to 600 (EDYKQRTQKKAEVEGK) form an actin-binding region. Lysine 609 is subject to N6-acetyllysine; alternate. Lysine 609 is covalently cross-linked (Glycyl lysine isopeptide (Lys-Gly) (interchain with G-Cter in SUMO2); alternate). Residues 624–651 (DEITYVELQKEEAQKLLEQYKEESKKAL) are a coiled coil. Residues lysine 638 and lysine 644 each participate in a glycyl lysine isopeptide (Lys-Gly) (interchain with G-Cter in SUMO2) cross-link. Residues 645 to 657 (EESKKALPPEKKQ) are compositionally biased toward basic and acidic residues. Positions 645–727 (EESKKALPPE…GSGGIGYPYP (83 aa)) are disordered. At arginine 676 the chain carries Omega-N-methylarginine. Gly residues predominate over residues 684–702 (GGFNMRGGNFRGGAPGNRG). The interval 688 to 713 (MRGGNFRGGAPGNRGGYNRRGNMPQR) is RNA-binding RGG-box. Asymmetric dimethylarginine occurs at positions 689, 694, and 701. An asymmetric dimethylarginine; alternate mark is found at arginine 707 and arginine 713. Omega-N-methylarginine; alternate is present on residues arginine 707 and arginine 713. Gly residues predominate over residues 713 to 723 (RGGGGGSGGIG). An asymmetric dimethylarginine mark is found at arginine 728 and arginine 735. Residues 743-772 (NYNRGGMPNRGNYNQNFRGRGNNRGYKNQS) are disordered. Position 787 is an N6-acetyllysine; alternate (lysine 787). Lysine 787 participates in a covalent cross-link: Glycyl lysine isopeptide (Lys-Gly) (interchain with G-Cter in SUMO2); alternate.

Oligomer (via ATPase domain and RNA-binding RGG-box region); oligomerization occurs upon ATP-binding in a chromatin-associated RNAs (caRNAs)- and transcription-dependent manner and is required for chromatin decompaction. ATP hydrolysis is required to cycle from an oligomeric to monomeric state to compact chromatin. Component of the coding region determinant (CRD)-mediated complex, composed of DHX9, HNRNPU, IGF2BP1, SYNCRIP and YBX1. Identified in the spliceosome C complex. Identified in a IGF2BP1-dependent mRNP granule complex containing untranslated mRNAs. Associates with heterogeneous nuclear ribonucleoprotein (hnRNP) particles. Associates (via middle region) with the C-terminal domain (CTD) RNA polymerase II (Pol II) holoenzyme; this association occurs in a RNA-independent manner. Associates (via middle region) with the core-TFIIH basal transcription factor complex; this association inhibits the CTD phosphorylation of RNA polymerase II holoenzyme by down-regulating TFIIH kinase activity. Associates with the telomerase holoenzyme complex. Associates with spindle microtubules (MTs) in a TPX2-dependent manner. Interacts (via C-terminus) with actin; this interaction is direct and mediates association with the phosphorylated CTD of RNA polymerase II and is disrupted in presence of the long non-coding H19 RNA. Interacts with AURKA. Interacts (via C-terminus) with CBX5; this interaction is, at least in part, RNA-dependent. Interacts with CR2. Interacts with CRY1. Interacts (via C-terminus) with EP300; this interaction enhances DNA-binding to nuclear scaffold/matrix attachment region (S/MAR) elements. Interacts with ERBB4. Interacts with GEMIN5. Interacts with IGF2BP1. Interacts with IGF2BP2 and IGF2BP3. Interacts with NCL; this interaction occurs during mitosis. Interacts (via C-terminus) with NR3C1 (via C-terminus). Interacts with PLK1; this interaction induces phosphorylation of HNRNPU at Ser-58 in mitosis. Interacts with POU3F4. Interacts with SMARCA4; this interaction occurs in embryonic stem cells and stimulates global Pol II-mediated transcription. Interacts (via C-terminus) with TOP2A; this interaction protects the topoisomerase TOP2A from degradation and positively regulates the relaxation of supercoiled DNA by TOP2A in a RNA-dependent manner. Interacts with TPX2; this interaction recruits HNRNPU to spindle microtubules (MTs). Interacts with UBQLN2. Interacts (via RNA-binding RGG-box region) with ZBTB7B; the interaction facilitates the recruitment of long non-coding RNA Blnc1 by ZBTB7B. Interacts with ERCC6. Cleaved at Asp-94 by CASP3 during T-cell apoptosis, resulting in a loss of DNA- and chromatin-binding activities. In terms of processing, extensively phosphorylated. Phosphorylated on Ser-58 by PLK1 and dephosphorylated by protein phosphatase 2A (PP2A) in mitosis. Post-translationally, arg-707 and Arg-713 are dimethylated, probably to asymmetric dimethylarginine. Citrullinated by PADI4.

The protein localises to the nucleus. The protein resides in the nucleus matrix. Its subcellular location is the chromosome. It localises to the nucleus speckle. It is found in the cytoplasm. The protein localises to the cytoskeleton. The protein resides in the microtubule organizing center. Its subcellular location is the centrosome. It localises to the centromere. It is found in the kinetochore. The protein localises to the spindle. The protein resides in the spindle pole. Its subcellular location is the midbody. It localises to the cell surface. It is found in the cytoplasmic granule. Its function is as follows. DNA- and RNA-binding protein involved in several cellular processes such as nuclear chromatin organization, telomere-length regulation, transcription, mRNA alternative splicing and stability, Xist-mediated transcriptional silencing and mitotic cell progression. Plays a role in the regulation of interphase large-scale gene-rich chromatin organization through chromatin-associated RNAs (caRNAs) in a transcription-dependent manner, and thereby maintains genomic stability. Required for the localization of the long non-coding Xist RNA on the inactive chromosome X (Xi) and the subsequent initiation and maintenance of X-linked transcriptional gene silencing during X-inactivation. Required for the topoisomerase TOP2A protein stability and activity in a RNA-dependent manner. Plays a role as a RNA polymerase II (Pol II) holoenzyme transcription regulator. Promotes transcription initiation by direct association with the core-TFIIH basal transcription factor complex for the assembly of a functional pre-initiation complex with Pol II in a actin-dependent manner. Blocks Pol II transcription elongation activity by inhibiting the C-terminal domain (CTD) phosphorylation of Pol II and dissociates from Pol II pre-initiation complex prior to productive transcription elongation. Positively regulates CBX5-induced transcriptional gene silencing and retention of CBX5 in the nucleus. Negatively regulates glucocorticoid-mediated transcriptional activation. Key regulator of transcription initiation and elongation in embryonic stem cells upon leukemia inhibitory factor (LIF) signaling. Involved in the long non-coding RNA H19-mediated Pol II transcriptional repression. Participates in the circadian regulation of the core clock component BMAL1 transcription. Plays a role in the regulation of telomere length. Plays a role as a global pre-mRNA alternative splicing modulator by regulating U2 small nuclear ribonucleoprotein (snRNP) biogenesis. Plays a role in mRNA stability. Component of the CRD-mediated complex that promotes MYC mRNA stabilization. Enhances the expression of specific genes, such as tumor necrosis factor TNFA, by regulating mRNA stability, possibly through binding to the 3'-untranslated region (UTR). Plays a role in mitotic cell cycle regulation. Involved in the formation of stable mitotic spindle microtubules (MTs) attachment to kinetochore, spindle organization and chromosome congression. Phosphorylation at Ser-58 by PLK1 is required for chromosome alignement and segregation and progression through mitosis. Also contributes to the targeting of AURKA to mitotic spindle MTs. Binds to double- and single-stranded DNA and RNA, poly(A), poly(C) and poly(G) oligoribonucleotides. Binds to chromatin-associated RNAs (caRNAs). Associates with chromatin to scaffold/matrix attachment region (S/MAR) elements in DNA. Associates with chromatin in a chromatin-associated RNAs (caRNAs)-dependent manner. Binds to the Xist RNA. Binds the long non-coding H19 RNA. Binds to SMN1/2 pre-mRNAs at G/U-rich regions. Binds to small nuclear RNAs (snRNAs). Binds to the 3'-UTR of TNFA mRNA. Binds (via RNA-binding RGG-box region) to the long non-coding Xist RNA; this binding is direct and bridges the Xist RNA and the inactive chromosome X (Xi). Also negatively regulates embryonic stem cell differentiation upon LIF signaling. Required for embryonic development. Binds to brown fat long non-coding RNA 1 (Blnc1); facilitates the recruitment of Blnc1 by ZBTB7B required to drive brown and beige fat development and thermogenesis. This chain is Heterogeneous nuclear ribonucleoprotein U, found in Rattus norvegicus (Rat).